The sequence spans 341 residues: Protein pelota homolog (341 aa).

The protein belongs to the eukaryotic release factor 1 family. Pelota subfamily. In terms of assembly, monomer. It depends on a divalent metal cation as a cofactor.

It localises to the cytoplasm. In terms of biological role, may function in recognizing stalled ribosomes, interact with stem-loop structures in stalled mRNA molecules, and effect endonucleolytic cleavage of the mRNA. May play a role in the release non-functional ribosomes and degradation of damaged mRNAs. Has endoribonuclease activity. The polypeptide is Protein pelota homolog (Methanospirillum hungatei JF-1 (strain ATCC 27890 / DSM 864 / NBRC 100397 / JF-1)).